A 248-amino-acid polypeptide reads, in one-letter code: 3-deoxy-manno-octulosonate cytidylyltransferase (248 aa).

The protein belongs to the KdsB family.

The protein localises to the cytoplasm. The enzyme catalyses 3-deoxy-alpha-D-manno-oct-2-ulosonate + CTP = CMP-3-deoxy-beta-D-manno-octulosonate + diphosphate. Its pathway is nucleotide-sugar biosynthesis; CMP-3-deoxy-D-manno-octulosonate biosynthesis; CMP-3-deoxy-D-manno-octulosonate from 3-deoxy-D-manno-octulosonate and CTP: step 1/1. The protein operates within bacterial outer membrane biogenesis; lipopolysaccharide biosynthesis. In terms of biological role, activates KDO (a required 8-carbon sugar) for incorporation into bacterial lipopolysaccharide in Gram-negative bacteria. This Chlorobaculum tepidum (strain ATCC 49652 / DSM 12025 / NBRC 103806 / TLS) (Chlorobium tepidum) protein is 3-deoxy-manno-octulosonate cytidylyltransferase.